The sequence spans 427 residues: 3-isopropylmalate dehydratase large subunit (427 aa).

[4Fe-4S] cluster is bound by residues cysteine 308, cysteine 368, and cysteine 371.

It belongs to the aconitase/IPM isomerase family. LeuC type 2 subfamily. As to quaternary structure, heterodimer of LeuC and LeuD. It depends on [4Fe-4S] cluster as a cofactor.

The catalysed reaction is (2R,3S)-3-isopropylmalate = (2S)-2-isopropylmalate. Its pathway is amino-acid biosynthesis; L-leucine biosynthesis; L-leucine from 3-methyl-2-oxobutanoate: step 2/4. Its function is as follows. Catalyzes the isomerization between 2-isopropylmalate and 3-isopropylmalate, via the formation of 2-isopropylmaleate. This Citrifermentans bemidjiense (strain ATCC BAA-1014 / DSM 16622 / JCM 12645 / Bem) (Geobacter bemidjiensis) protein is 3-isopropylmalate dehydratase large subunit.